The following is a 287-amino-acid chain: MEIGLREWLIVIGIIVIAGILFDGWRRMRGSKGKLKFRLDRSFSNLPDEEETTSAEVLGPPRVLDTHKEPQLDEHDLPSMSASPREGKRSNSDKRSDKKRKDEPQQGDLNLDLDGPSLFTGRDDDFPDDKPTQRITEDKDLPPVEEVLVISVISRSEGGFKGPALLQNILESGLRFGEMDIFHRHESMAGNGEVLFSMANAVKPGVFDLDDIDHFSTRAVSFFLGLPGPRHPKQAFDVMVAAARKLAHELDGELKDDQRSVMTAQTIEHYRQRIVEFERRALTQRRG.

A topological domain (periplasmic) is located at residue Met-1. The chain crosses the membrane as a helical span at residues Glu-2–Phe-22. Residues Asp-23 to Gly-287 lie on the Cytoplasmic side of the membrane. A disordered region spans residues Asp-48–Asp-140. Composition is skewed to basic and acidic residues over residues Leu-64–Leu-77, Arg-85–Pro-104, and Gly-121–Asp-140.

It belongs to the ZipA family. As to quaternary structure, interacts with FtsZ via their C-terminal domains.

The protein resides in the cell inner membrane. Its function is as follows. Essential cell division protein that stabilizes the FtsZ protofilaments by cross-linking them and that serves as a cytoplasmic membrane anchor for the Z ring. Also required for the recruitment to the septal ring of downstream cell division proteins. The polypeptide is Cell division protein ZipA (Pseudomonas syringae pv. syringae (strain B728a)).